The chain runs to 119 residues: Ribonuclease P protein component (119 aa).

This sequence belongs to the RnpA family. In terms of assembly, consists of a catalytic RNA component (M1 or rnpB) and a protein subunit.

The enzyme catalyses Endonucleolytic cleavage of RNA, removing 5'-extranucleotides from tRNA precursor.. Its function is as follows. RNaseP catalyzes the removal of the 5'-leader sequence from pre-tRNA to produce the mature 5'-terminus. It can also cleave other RNA substrates such as 4.5S RNA. The protein component plays an auxiliary but essential role in vivo by binding to the 5'-leader sequence and broadening the substrate specificity of the ribozyme. This Yersinia pseudotuberculosis serotype O:1b (strain IP 31758) protein is Ribonuclease P protein component.